The sequence spans 225 residues: Protein-disulfide oxidoreductase DsbI (225 aa).

A helical transmembrane segment spans residues Phe-27 to Phe-47. Cys-56 and Cys-59 are oxidised to a cystine. 2 helical membrane passes run Ala-65–Leu-85 and Leu-87–Leu-107. Cysteines 128 and 154 form a disulfide. A helical membrane pass occupies residues Cys-199–Leu-219.

This sequence belongs to the DsbB family. DsbI subfamily. As to quaternary structure, interacts with DsbL.

It localises to the cell inner membrane. Required for disulfide bond formation in some proteins. Part of a redox system composed of DsbI and DsbL that mediates formation of an essential disulfide bond in AssT. The chain is Protein-disulfide oxidoreductase DsbI from Salmonella choleraesuis (strain SC-B67).